Reading from the N-terminus, the 304-residue chain is Probable 5-dehydro-4-deoxyglucarate dehydratase (304 aa).

The protein belongs to the DapA family.

The catalysed reaction is 5-dehydro-4-deoxy-D-glucarate + H(+) = 2,5-dioxopentanoate + CO2 + H2O. Its pathway is carbohydrate acid metabolism; D-glucarate degradation; 2,5-dioxopentanoate from D-glucarate: step 2/2. This chain is Probable 5-dehydro-4-deoxyglucarate dehydratase, found in Arthrobacter sp. (strain FB24).